We begin with the raw amino-acid sequence, 257 residues long: Phosphonates import ATP-binding protein PhnC (257 aa).

The 245-residue stretch at I4–I248 folds into the ABC transporter domain.

This sequence belongs to the ABC transporter superfamily. Phosphonates importer (TC 3.A.1.9.1) family. In terms of assembly, the complex is composed of two ATP-binding proteins (PhnC), two transmembrane proteins (PhnE) and a solute-binding protein (PhnD).

The protein resides in the cell membrane. The catalysed reaction is phosphonate(out) + ATP + H2O = phosphonate(in) + ADP + phosphate + H(+). In terms of biological role, part of the ABC transporter complex PhnCDE involved in phosphonates import. Responsible for energy coupling to the transport system. The chain is Phosphonates import ATP-binding protein PhnC from Staphylococcus epidermidis (strain ATCC 35984 / DSM 28319 / BCRC 17069 / CCUG 31568 / BM 3577 / RP62A).